Here is a 952-residue protein sequence, read N- to C-terminus: G patch domain-containing protein 1 homolog (952 aa).

Disordered regions lie at residues Gln104–Arg127, Gly165–Glu233, Asp320–Ser345, Arg370–Ser432, Pro660–Pro711, and Val822–His952. Positions Arg107–Asp123 are enriched in basic and acidic residues. The region spanning Arg153–Gly199 is the G-patch domain. The span at Asp214–Glu233 shows a compositional bias: acidic residues. Residues Pro323–Gln333 are compositionally biased toward basic residues. 3 stretches are compositionally biased toward basic and acidic residues: residues Pro375–Pro402, Gln414–Ser432, and Ile679–Lys691. The span at Ala886–Asp896 shows a compositional bias: low complexity. Composition is skewed to basic residues over residues Lys906–Lys934 and His941–His952.

Belongs to the GPATCH1 family.

This Drosophila melanogaster (Fruit fly) protein is G patch domain-containing protein 1 homolog.